The following is a 72-amino-acid chain: Alpha-elapitoxin-Dpp2c (72 aa).

Intrachain disulfides connect cysteine 3-cysteine 21, cysteine 14-cysteine 42, cysteine 27-cysteine 31, cysteine 46-cysteine 57, and cysteine 58-cysteine 63.

The protein belongs to the three-finger toxin family. Long-chain subfamily. Type II alpha-neurotoxin sub-subfamily. In terms of tissue distribution, expressed by the venom gland.

It is found in the secreted. Its function is as follows. Binds with high affinity to muscular (alpha-1/CHRNA1) and neuronal (alpha-7/CHRNA7) nicotinic acetylcholine receptor (nAChR) and inhibits acetylcholine from binding to the receptor, thereby impairing neuromuscular and neuronal transmission. The sequence is that of Alpha-elapitoxin-Dpp2c from Dendroaspis polylepis polylepis (Black mamba).